A 430-amino-acid chain; its full sequence is Serine--tRNA ligase (430 aa).

Residue 237-239 (TAE) participates in L-serine binding. 268 to 270 (RSE) contributes to the ATP binding site. Position 291 (Glu291) interacts with L-serine. 355-358 (EISS) serves as a coordination point for ATP. Ser391 lines the L-serine pocket.

This sequence belongs to the class-II aminoacyl-tRNA synthetase family. Type-1 seryl-tRNA synthetase subfamily. Homodimer. The tRNA molecule binds across the dimer.

Its subcellular location is the cytoplasm. It catalyses the reaction tRNA(Ser) + L-serine + ATP = L-seryl-tRNA(Ser) + AMP + diphosphate + H(+). It carries out the reaction tRNA(Sec) + L-serine + ATP = L-seryl-tRNA(Sec) + AMP + diphosphate + H(+). It participates in aminoacyl-tRNA biosynthesis; selenocysteinyl-tRNA(Sec) biosynthesis; L-seryl-tRNA(Sec) from L-serine and tRNA(Sec): step 1/1. Catalyzes the attachment of serine to tRNA(Ser). Is also able to aminoacylate tRNA(Sec) with serine, to form the misacylated tRNA L-seryl-tRNA(Sec), which will be further converted into selenocysteinyl-tRNA(Sec). This chain is Serine--tRNA ligase, found in Shigella dysenteriae serotype 1 (strain Sd197).